Consider the following 494-residue polypeptide: UPF0371 protein SPCG_0344 (494 aa).

The protein belongs to the UPF0371 family.

The polypeptide is UPF0371 protein SPCG_0344 (Streptococcus pneumoniae (strain CGSP14)).